A 377-amino-acid chain; its full sequence is GTPase Obg (377 aa).

The region spanning 1–159 (MKFVDEATIE…RRLRMELKVL (159 aa)) is the Obg domain. The segment at 127–148 (NIHFKSSTNRAPRQWTPGKEGE) is disordered. The OBG-type G domain occupies 160–336 (ADVGLLGLPN…LIWALQDYLD (177 aa)). Residues 166 to 173 (GLPNAGKS), 191 to 195 (FTTLH), 213 to 216 (DIPG), 288 to 291 (NKLD), and 317 to 319 (SGL) each bind GTP. The Mg(2+) site is built by S173 and T193. A disordered region spans residues 339 to 377 (KRKDQDAQDQADGTYVFEDPRFDASRGGAAPATPPGGDE).

It belongs to the TRAFAC class OBG-HflX-like GTPase superfamily. OBG GTPase family. As to quaternary structure, monomer. The cofactor is Mg(2+).

It is found in the cytoplasm. An essential GTPase which binds GTP, GDP and possibly (p)ppGpp with moderate affinity, with high nucleotide exchange rates and a fairly low GTP hydrolysis rate. Plays a role in control of the cell cycle, stress response, ribosome biogenesis and in those bacteria that undergo differentiation, in morphogenesis control. The chain is GTPase Obg from Bordetella bronchiseptica (strain ATCC BAA-588 / NCTC 13252 / RB50) (Alcaligenes bronchisepticus).